The primary structure comprises 475 residues: Sulfate adenylyltransferase subunit 1 (475 aa).

Positions 25 to 239 (KSLLRFLTCG…EVLETVEIQR (215 aa)) constitute a tr-type G domain. Positions 34–41 (GSVDDGKS) are G1. 34–41 (GSVDDGKS) lines the GTP pocket. The interval 92–96 (GITID) is G2. The G3 stretch occupies residues 113 to 116 (DTPG). GTP contacts are provided by residues 113–117 (DTPGH) and 168–171 (NKMD). Positions 168–171 (NKMD) are G4. The interval 206–208 (SAL) is G5.

The protein belongs to the TRAFAC class translation factor GTPase superfamily. Classic translation factor GTPase family. CysN/NodQ subfamily. Heterodimer composed of CysD, the smaller subunit, and CysN.

It carries out the reaction sulfate + ATP + H(+) = adenosine 5'-phosphosulfate + diphosphate. Its pathway is sulfur metabolism; hydrogen sulfide biosynthesis; sulfite from sulfate: step 1/3. Functionally, with CysD forms the ATP sulfurylase (ATPS) that catalyzes the adenylation of sulfate producing adenosine 5'-phosphosulfate (APS) and diphosphate, the first enzymatic step in sulfur assimilation pathway. APS synthesis involves the formation of a high-energy phosphoric-sulfuric acid anhydride bond driven by GTP hydrolysis by CysN coupled to ATP hydrolysis by CysD. In Shigella boydii serotype 18 (strain CDC 3083-94 / BS512), this protein is Sulfate adenylyltransferase subunit 1.